A 198-amino-acid polypeptide reads, in one-letter code: Interferon gamma (198 aa).

The signal sequence occupies residues 1-23 (MMVSTARAVVCLSLCLCVCQVRG). N31, N42, and N174 each carry an N-linked (GlcNAc...) asparagine glycan. Positions 173-198 (SNNTKMQRRRRRRRRQARKVKTPTRA) are disordered. Over residues 178 to 198 (MQRRRRRRRRQARKVKTPTRA) the composition is skewed to basic residues.

It belongs to the type II (or gamma) interferon family. In terms of assembly, homodimer.

Its subcellular location is the secreted. Functionally, cytokine which binds to interferon gamma receptor 1 (ifngr1). Also binds with lower affinity to interferon gamma receptor 1-like (ifngr1l). Has activating effects on macrophages and neutrophils. This chain is Interferon gamma, found in Paralichthys olivaceus (Bastard halibut).